We begin with the raw amino-acid sequence, 490 residues long: B3 domain-containing protein LOC_Os12g40080 (490 aa).

The segment at residues 24–117 is a DNA-binding region (TF-B3 1); that stretch reads GKSFIKVMIT…HFKVWIYDPS (94 aa). Residues 161 to 191 form a disordered region; that stretch reads SGHSKETSEINPANSPSWKPTERVPSSEELD. The segment covering 169–178 has biased composition (polar residues); the sequence is EINPANSPSW. 2 consecutive DNA-binding regions (TF-B3) follow at residues 236–331 and 389–487; these read FYIT…FHPL and VAVM…IRKS.

Its subcellular location is the nucleus. The polypeptide is B3 domain-containing protein LOC_Os12g40080 (Oryza sativa subsp. japonica (Rice)).